We begin with the raw amino-acid sequence, 474 residues long: uncharacterized protein (474 aa).

The helical transmembrane segment at 3-23 threads the bilayer; the sequence is LTLWLVLGAVGVGAVGTGVGF. The disordered stretch occupies residues 171 to 296; sequence VSDGSSSKTR…KETKDRTKVD (126 aa). The span at 180–210 shows a compositional bias: basic residues; that stretch reads RTPKKTKTSKKKPIKKKSSKSKSSKGSKKQK. The segment covering 231-253 has biased composition (polar residues); sequence TRSQSKQQKGQEQATDQTDSEGV. Residues 257-266 show a composition bias toward acidic residues; the sequence is EGADNTDTEL. The segment covering 267-281 has biased composition (low complexity); the sequence is VETTAETTEQEATTK. Over residues 282–296 the composition is skewed to basic and acidic residues; the sequence is STKDTKETKDRTKVD.

The protein resides in the membrane. This is an uncharacterized protein from Mycoplasma pneumoniae (strain ATCC 29342 / M129 / Subtype 1) (Mycoplasmoides pneumoniae).